We begin with the raw amino-acid sequence, 299 residues long: Probable lipid kinase YegS-like (299 aa).

The 132-residue stretch at 2–133 folds into the DAGKc domain; sequence ATYPESLLIL…VDIAQVNDKT (132 aa). Residues T40, 66–72, and T95 each bind ATP; that span reads GDGTINE. Mg(2+)-binding residues include L215, D218, and L220. E271 acts as the Proton acceptor in catalysis.

This sequence belongs to the diacylglycerol/lipid kinase family. YegS lipid kinase subfamily. Mg(2+) is required as a cofactor. The cofactor is Ca(2+).

The protein resides in the cytoplasm. Probably phosphorylates lipids; the in vivo substrate is unknown. This Enterobacter sp. (strain 638) protein is Probable lipid kinase YegS-like.